The sequence spans 100 residues: Integration host factor subunit alpha (100 aa).

It belongs to the bacterial histone-like protein family. As to quaternary structure, heterodimer of an alpha and a beta chain.

Functionally, this protein is one of the two subunits of integration host factor, a specific DNA-binding protein that functions in genetic recombination as well as in transcriptional and translational control. The chain is Integration host factor subunit alpha from Buchnera aphidicola subsp. Schizaphis graminum (strain Sg).